We begin with the raw amino-acid sequence, 359 residues long: GTP cyclohydrolase FolE2 (359 aa).

This sequence belongs to the GTP cyclohydrolase IV family.

It catalyses the reaction GTP + H2O = 7,8-dihydroneopterin 3'-triphosphate + formate + H(+). The protein operates within cofactor biosynthesis; 7,8-dihydroneopterin triphosphate biosynthesis; 7,8-dihydroneopterin triphosphate from GTP: step 1/1. Its function is as follows. Converts GTP to 7,8-dihydroneopterin triphosphate. The protein is GTP cyclohydrolase FolE2 of Cereibacter sphaeroides (strain KD131 / KCTC 12085) (Rhodobacter sphaeroides).